The chain runs to 382 residues: Chaperone protein DnaJ (382 aa).

In terms of domain architecture, J spans 5–70 (DYYEVLGLQK…QKRAAYDQYG (66 aa)). Residues 134-212 (GTTKDIQINT…CHGEGRVHKK (79 aa)) form a CR-type zinc finger. Residues Cys147, Cys150, Cys164, Cys167, Cys186, Cys189, Cys200, and Cys203 each contribute to the Zn(2+) site. CXXCXGXG motif repeat units follow at residues 147–154 (CDSCGGSG), 164–171 (CPHCHGSG), 186–193 (CPTCHGSG), and 200–207 (CRNCHGEG).

Belongs to the DnaJ family. As to quaternary structure, homodimer. Zn(2+) serves as cofactor.

The protein resides in the cytoplasm. Functionally, participates actively in the response to hyperosmotic and heat shock by preventing the aggregation of stress-denatured proteins and by disaggregating proteins, also in an autonomous, DnaK-independent fashion. Unfolded proteins bind initially to DnaJ; upon interaction with the DnaJ-bound protein, DnaK hydrolyzes its bound ATP, resulting in the formation of a stable complex. GrpE releases ADP from DnaK; ATP binding to DnaK triggers the release of the substrate protein, thus completing the reaction cycle. Several rounds of ATP-dependent interactions between DnaJ, DnaK and GrpE are required for fully efficient folding. Also involved, together with DnaK and GrpE, in the DNA replication of plasmids through activation of initiation proteins. The chain is Chaperone protein DnaJ from Haemophilus influenzae (strain ATCC 51907 / DSM 11121 / KW20 / Rd).